The sequence spans 78 residues: Acyl carrier protein (78 aa).

Positions 4-78 (AEIRDKVYDI…QQAIDYIVKK (75 aa)) constitute a Carrier domain. Serine 39 is modified (O-(pantetheine 4'-phosphoryl)serine).

The protein belongs to the acyl carrier protein (ACP) family. In terms of processing, 4'-phosphopantetheine is transferred from CoA to a specific serine of apo-ACP by AcpS. This modification is essential for activity because fatty acids are bound in thioester linkage to the sulfhydryl of the prosthetic group.

The protein localises to the cytoplasm. It participates in lipid metabolism; fatty acid biosynthesis. Functionally, carrier of the growing fatty acid chain in fatty acid biosynthesis. The sequence is that of Acyl carrier protein from Chlorobium luteolum (strain DSM 273 / BCRC 81028 / 2530) (Pelodictyon luteolum).